Consider the following 455-residue polypeptide: Argininosuccinate lyase (455 aa).

The protein belongs to the lyase 1 family. Argininosuccinate lyase subfamily.

The protein resides in the cytoplasm. The enzyme catalyses 2-(N(omega)-L-arginino)succinate = fumarate + L-arginine. It functions in the pathway amino-acid biosynthesis; L-arginine biosynthesis; L-arginine from L-ornithine and carbamoyl phosphate: step 3/3. The chain is Argininosuccinate lyase from Shewanella denitrificans (strain OS217 / ATCC BAA-1090 / DSM 15013).